Consider the following 177-residue polypeptide: ATP synthase subunit delta (177 aa).

This sequence belongs to the ATPase delta chain family. As to quaternary structure, F-type ATPases have 2 components, F(1) - the catalytic core - and F(0) - the membrane proton channel. F(1) has five subunits: alpha(3), beta(3), gamma(1), delta(1), epsilon(1). F(0) has three main subunits: a(1), b(2) and c(10-14). The alpha and beta chains form an alternating ring which encloses part of the gamma chain. F(1) is attached to F(0) by a central stalk formed by the gamma and epsilon chains, while a peripheral stalk is formed by the delta and b chains.

It localises to the cell inner membrane. Its function is as follows. F(1)F(0) ATP synthase produces ATP from ADP in the presence of a proton or sodium gradient. F-type ATPases consist of two structural domains, F(1) containing the extramembraneous catalytic core and F(0) containing the membrane proton channel, linked together by a central stalk and a peripheral stalk. During catalysis, ATP synthesis in the catalytic domain of F(1) is coupled via a rotary mechanism of the central stalk subunits to proton translocation. This protein is part of the stalk that links CF(0) to CF(1). It either transmits conformational changes from CF(0) to CF(1) or is implicated in proton conduction. The sequence is that of ATP synthase subunit delta from Neisseria meningitidis serogroup C (strain 053442).